Here is a 251-residue protein sequence, read N- to C-terminus: 14-3-3-like protein (251 aa).

The protein belongs to the 14-3-3 family. In terms of tissue distribution, most abundant in roots and flowers.

This chain is 14-3-3-like protein, found in Nicotiana tabacum (Common tobacco).